A 378-amino-acid chain; its full sequence is 1-acyl-sn-glycerol-3-phosphate acyltransferase delta (378 aa).

Residues 11 to 31 (FLCHLVFCYVFIASGLIVNAI) form a helical membrane-spanning segment. An HXXXXD motif motif is present at residues 96 to 101 (HKFEID). The next 3 helical transmembrane spans lie at 125 to 145 (ELAY…IFCT), 311 to 331 (WLFW…SMVS), and 338 to 358 (LASL…MIGV).

The protein belongs to the 1-acyl-sn-glycerol-3-phosphate acyltransferase family.

The protein resides in the endoplasmic reticulum membrane. It catalyses the reaction a 1-acyl-sn-glycero-3-phosphate + an acyl-CoA = a 1,2-diacyl-sn-glycero-3-phosphate + CoA. The catalysed reaction is (4Z,7Z,10Z,13Z,16Z,19Z)-docosahexaenoyl-CoA + 1-hexadecanoyl-sn-glycero-3-phosphate = 1-hexadecanoyl-2-(4Z,7Z,10Z,13Z,16Z,19Z-docosahexaenoyl)-sn-glycero-3-phosphate + CoA. It carries out the reaction 1-octadecanoyl-sn-glycero-3-phosphate + (9Z,12Z)-octadecadienoyl-CoA = 1-octadecanoyl-2-(9Z,12Z-octadecadienoyl)-sn-glycero-3-phosphate + CoA. The enzyme catalyses 1-octadecanoyl-sn-glycero-3-phosphate + (4Z,7Z,10Z,13Z,16Z,19Z)-docosahexaenoyl-CoA = 1-octadecanoyl-2-(4Z,7Z,10Z,13Z,16Z,19Z-docosahexaenoyl)-sn-glycero-3-phosphate + CoA. It catalyses the reaction (4Z,7Z,10Z,13Z,16Z,19Z)-docosahexaenoyl-CoA + 1-(9Z-octadecenoyl)-sn-glycero-3-phosphate = 1-(9Z-octadecenoyl)-2-(4Z,7Z,10Z,13Z,16Z,19Z-docosahexaenoyl)-sn-glycero-3-phosphate + CoA. It functions in the pathway phospholipid metabolism; CDP-diacylglycerol biosynthesis; CDP-diacylglycerol from sn-glycerol 3-phosphate: step 2/3. In terms of biological role, converts 1-acyl-sn-glycerol-3-phosphate (lysophosphatidic acid or LPA) into 1,2-diacyl-sn-glycerol-3-phosphate (phosphatidic acid or PA) by incorporating an acyl moiety at the sn-2 position of the glycerol backbone. Exhibits high acyl-CoA specificity for polyunsaturated fatty acyl-CoA, especially docosahexaenoyl-CoA (22:6-CoA, DHA-CoA). In Rattus norvegicus (Rat), this protein is 1-acyl-sn-glycerol-3-phosphate acyltransferase delta (Agpat4).